The primary structure comprises 206 residues: Thymidylate kinase (206 aa).

An ATP-binding site is contributed by 16–23; that stretch reads GIDGTGKS.

This sequence belongs to the thymidylate kinase family.

The enzyme catalyses dTMP + ATP = dTDP + ADP. Its function is as follows. Phosphorylation of dTMP to form dTDP in both de novo and salvage pathways of dTTP synthesis. The protein is Thymidylate kinase of Akkermansia muciniphila (strain ATCC BAA-835 / DSM 22959 / JCM 33894 / BCRC 81048 / CCUG 64013 / CIP 107961 / Muc).